An 87-amino-acid chain; its full sequence is Small ribosomal subunit protein uS15c (87 aa).

Belongs to the universal ribosomal protein uS15 family. As to quaternary structure, part of the 30S ribosomal subunit.

The protein localises to the plastid. The protein resides in the chloroplast. This Solanum tuberosum (Potato) protein is Small ribosomal subunit protein uS15c (rps15).